We begin with the raw amino-acid sequence, 87 residues long: Putative acyl-CoA-binding protein (87 aa).

The ACB domain occupies 1–86 (MSSTFEQAAA…VDELKTKYGM (86 aa)). An acyl-CoA contacts are provided by residues Lys13, 28–32 (YALFK), Lys50, Lys54, and Tyr73.

The protein belongs to the ACBP family.

It localises to the cytoplasm. The protein resides in the nucleus. Its function is as follows. Binds medium- and long-chain acyl-CoA esters with very high affinity and may function as an intracellular carrier of acyl-CoA esters. May enhance the activity of the ceramide synthase complex. The sequence is that of Putative acyl-CoA-binding protein from Schizosaccharomyces pombe (strain 972 / ATCC 24843) (Fission yeast).